The chain runs to 358 residues: MGAIISRWKTKLTTVEQLENIDKEIKQLEEFRAKNQRLQKLWVGRLLLYSSALYLLISLFVYLLYLPEQWLLRLAMALPFFIYPVLVWFIRRFLIFLFSKRSERNNDKLEDLKATKKKILEEVMETETYKNAKAILERFDPDAKKKPELEATPVRPQMTPGAGQELRQRGVALRHMPMGTPVAVTPGARPPLGPGGTPVERVPLSAPGGPPERSGLAASVQMTPRSLGSPVPGVGMHPPGPPLARPVLPKDRGAVDRVIEYLVGDGPQNRYALICQQCFSHNGMALKEEFEYLAFRCAYCYFLNPARKMRPQAPRLPEFNFEKRLRAESSTPGPAPHSATDTEESAPPSRGMDKHGRA.

The Cytoplasmic segment spans residues 1 to 45 (MGAIISRWKTKLTTVEQLENIDKEIKQLEEFRAKNQRLQKLWVGR). The stretch at 9 to 41 (KTKLTTVEQLENIDKEIKQLEEFRAKNQRLQKL) forms a coiled coil. The chain crosses the membrane as a helical span at residues 46-66 (LLLYSSALYLLISLFVYLLYL). At 67-69 (PEQ) the chain is on the lumenal side. Residues 70–90 (WLLRLAMALPFFIYPVLVWFI) traverse the membrane as a helical segment. Over 91-358 (RRFLIFLFSK…SRGMDKHGRA (268 aa)) the chain is Cytoplasmic. Residues 99 to 128 (SKRSERNNDKLEDLKATKKKILEEVMETET) adopt a coiled-coil conformation. The segment at 275–300 (CQQCFSHNGMALKEEFEYLAFRCAYC) adopts a C4-type; plays a role in ER morphology zinc-finger fold. Positions 320–358 (NFEKRLRAESSTPGPAPHSATDTEESAPPSRGMDKHGRA) are disordered.

Belongs to the lunapark family. Homodimer; homodimerization requires the C4-type zinc finger motif and decreases during mitosis in a phosphorylation-dependent manner. Post-translationally, phosphorylated. Phosphorylation occurs during interphase. Phosphorylation also occurs during mitosis; these phosphorylations reduce both its homodimerization and the ER three-way tubular junction formation.

The protein localises to the endoplasmic reticulum membrane. Endoplasmic reticulum (ER)-shaping membrane protein that plays a role in determining ER morphology. Involved in the stabilization of nascent three-way ER tubular junctions within the ER network. May also play a role as a curvature-stabilizing protein within three-way ER tubular junction network. This Takifugu rubripes (Japanese pufferfish) protein is Endoplasmic reticulum junction formation protein lunapark-B (lnpkb).